A 659-amino-acid chain; its full sequence is Interferon-induced GTP-binding protein Mx2 (659 aa).

The Dynamin-type G domain occupies 65-338 (DLALPAIAVI…LISHICKSLP (274 aa)). Positions 75-82 (GDQSSGKS) are G1 motif. Residue 75-82 (GDQSSGKS) participates in GTP binding. Residues 100 to 102 (VTR) form a G2 motif region. Residues 176–179 (DLPG) are G3 motif. Residues 176–180 (DLPGI) and 245–248 (TKPD) each bind GTP. The interval 245 to 248 (TKPD) is G4 motif. Residues 277–280 (KCRG) are G5 motif. Residues 547–567 (EAEEEERKHGKSRSSQSKNLQ) form a disordered region. The GED domain maps to 571 to 659 (MDEIFQHLNA…AQRRLAKFPG (89 aa)).

This sequence belongs to the TRAFAC class dynamin-like GTPase superfamily. Dynamin/Fzo/YdjA family.

The protein localises to the cytoplasm. Interferon-induced dynamin-like GTPase with antiviral activity against vesicular stomatitis virus (VSV). This is Interferon-induced GTP-binding protein Mx2 (Mx2) from Rattus norvegicus (Rat).